Reading from the N-terminus, the 287-residue chain is 2-dehydro-3-deoxyphosphooctonate aldolase (287 aa).

Belongs to the KdsA family.

It is found in the cytoplasm. It catalyses the reaction D-arabinose 5-phosphate + phosphoenolpyruvate + H2O = 3-deoxy-alpha-D-manno-2-octulosonate-8-phosphate + phosphate. It participates in carbohydrate biosynthesis; 3-deoxy-D-manno-octulosonate biosynthesis; 3-deoxy-D-manno-octulosonate from D-ribulose 5-phosphate: step 2/3. It functions in the pathway bacterial outer membrane biogenesis; lipopolysaccharide biosynthesis. The chain is 2-dehydro-3-deoxyphosphooctonate aldolase from Caulobacter vibrioides (strain ATCC 19089 / CIP 103742 / CB 15) (Caulobacter crescentus).